The primary structure comprises 925 residues: Eukaryotic translation initiation factor 3 subunit A (925 aa).

The interval 108 to 127 (QAQTDAKEESNKDQAEEDLE) is disordered. The segment covering 112–121 (DAKEESNKDQ) has biased composition (basic and acidic residues). Positions 324-498 (FKFYSSQFVL…DTVSFAQDPF (175 aa)) constitute a PCI domain. Disordered stretches follow at residues 509–544 (PESSTSDEAKNSESEEETSQETHADEEQNEQVFTRN) and 839–925 (KEAL…AGRG). Coiled-coil stretches lie at residues 534 to 666 (EEQN…MKKL) and 785 to 885 (SVIA…SSRS). The segment covering 839–880 (KEALAKEEELAKRRAERERINKERDEIARKQREIEELLEKKN) has biased composition (basic and acidic residues). Residues 916-925 (RLKRMNAGRG) are compositionally biased toward basic residues.

The protein belongs to the eIF-3 subunit A family. As to quaternary structure, component of the eukaryotic translation initiation factor 3 (eIF-3) complex.

The protein resides in the cytoplasm. Functionally, RNA-binding component of the eukaryotic translation initiation factor 3 (eIF-3) complex, which is involved in protein synthesis of a specialized repertoire of mRNAs and, together with other initiation factors, stimulates binding of mRNA and methionyl-tRNAi to the 40S ribosome. The eIF-3 complex specifically targets and initiates translation of a subset of mRNAs involved in cell proliferation. In Kluyveromyces lactis (strain ATCC 8585 / CBS 2359 / DSM 70799 / NBRC 1267 / NRRL Y-1140 / WM37) (Yeast), this protein is Eukaryotic translation initiation factor 3 subunit A.